A 201-amino-acid polypeptide reads, in one-letter code: Large ribosomal subunit protein uL4 (201 aa).

The disordered stretch occupies residues 46–71 (QKTRAEVVGSGKKPWRQKGTGRARAG).

The protein belongs to the universal ribosomal protein uL4 family. In terms of assembly, part of the 50S ribosomal subunit.

One of the primary rRNA binding proteins, this protein initially binds near the 5'-end of the 23S rRNA. It is important during the early stages of 50S assembly. It makes multiple contacts with different domains of the 23S rRNA in the assembled 50S subunit and ribosome. Its function is as follows. Forms part of the polypeptide exit tunnel. The chain is Large ribosomal subunit protein uL4 from Shewanella woodyi (strain ATCC 51908 / MS32).